Here is a 572-residue protein sequence, read N- to C-terminus: Phosphoenolpyruvate-protein phosphotransferase (572 aa).

The active-site Tele-phosphohistidine intermediate is histidine 191. Phosphoenolpyruvate is bound by residues arginine 298 and arginine 334. The Mg(2+) site is built by glutamate 433 and aspartate 457. Residues 456–457 (ND) and arginine 467 each bind phosphoenolpyruvate. Residue cysteine 504 is the Proton donor of the active site.

It belongs to the PEP-utilizing enzyme family. As to quaternary structure, homodimer. Mg(2+) serves as cofactor.

It is found in the cytoplasm. It carries out the reaction L-histidyl-[protein] + phosphoenolpyruvate = N(pros)-phospho-L-histidyl-[protein] + pyruvate. Functionally, general (non sugar-specific) component of the phosphoenolpyruvate-dependent sugar phosphotransferase system (sugar PTS). This major carbohydrate active-transport system catalyzes the phosphorylation of incoming sugar substrates concomitantly with their translocation across the cell membrane. Enzyme I transfers the phosphoryl group from phosphoenolpyruvate (PEP) to the phosphoryl carrier protein (HPr). The protein is Phosphoenolpyruvate-protein phosphotransferase (ptsI) of Staphylococcus aureus (strain COL).